Here is a 333-residue protein sequence, read N- to C-terminus: MKFLLVAALCALVAIGSCKPTREEIKTFEQFKKVFGKVYRNAEEEARREHHFKEQLKWVEEHNGIDGVEYAINEYSDMSEQEFSFHLSGGGLNFTYMKMEAAKEPLINTYGSLPQNFDWRQKARLTRIRQQGSCGSCWAFAAAGVAESLYSIQKQQSIELSEQELVDCTYNRYDSSYQCNGCGSGYSTEAFKYMIRTGLVEEENYPYNMRTQWCNPDVEGQRYHVSGYQQLRYQSSDEDVMYTIQQHGPVVIYMHGSNNYFRNLGNGVLRGVAYNDAYTDHAVILVGWGTVQGVDYWIIRNSWGTGWGNGGYGYVERGHNSLGINNFVTYATL.

The first 18 residues, 1–18, serve as a signal peptide directing secretion; that stretch reads MKFLLVAALCALVAIGSC. Residues 19–108 constitute a propeptide, activation peptide; it reads KPTREEIKTF…MEAAKEPLIN (90 aa). Residue Asn-93 is glycosylated (N-linked (GlcNAc...) asparagine). 2 disulfide bridges follow: Cys-134-Cys-182 and Cys-168-Cys-214. Residue Cys-137 is part of the active site. Catalysis depends on residues His-281 and Asn-301.

It belongs to the peptidase C1 family. As to quaternary structure, homodimer.

Functionally, cysteine protease. This Blomia tropicalis (Mite) protein is Cysteine protease.